Here is an 835-residue protein sequence, read N- to C-terminus: Cap-specific mRNA (nucleoside-2'-O-)-methyltransferase 1 (835 aa).

The Bipartite nuclear localization signal motif lies at 2 to 19 (RRRNDPECTAPIKKQKKR). Residues 24-68 (ALNLSAASGDEPPSSVNHAAKASTTSLSGSDSETEGKQHGSDSFD) form a disordered region. 5 positions are modified to phosphoserine: Ser-28, Ser-31, Ser-53, Ser-66, and Ser-91. Polar residues predominate over residues 37–54 (SSVNHAAKASTTSLSGSD). Residues 57–68 (TEGKQHGSDSFD) are compositionally biased toward basic and acidic residues. Residues 87-133 (YNSVSQKLMAKMGFREGEGLGKYSQGRKDIVEASNQKGRRGLGLTLQ) enclose the G-patch domain. At Lys-108 the chain carries N6-acetyllysine. Substrate is bound by residues 203–207 (KSVFD) and Arg-218. Residues 231–450 (FFLNRAAMKM…ERYVVCKGLK (220 aa)) enclose the RrmJ-type SAM-dependent 2'-O-MTase domain. Asn-234 is a binding site for S-adenosyl-L-methionine. Lys-239 is a catalytic residue. S-adenosyl-L-methionine contacts are provided by residues 277 to 283 (CAGPGGF) and 335 to 336 (DI). Residue Asp-364 is part of the active site. Substrate is bound at residue 374-376 (NLQ). Residue Lys-404 is the Proton acceptor of the active site. Asn-439 provides a ligand contact to substrate. The interaction with POLR2A stretch occupies residues 727–835 (SSGTPKLSYT…VLSFIQTHSA (109 aa)). The WW domain maps to 752–786 (RTVNEPWTMGFSKSFKRKFFYNKKTKISTFDLPAD).

As to quaternary structure, interacts with POLR2A (via C-terminus).

The protein resides in the nucleus. The catalysed reaction is a 5'-end (N(7)-methyl 5'-triphosphoguanosine)-ribonucleoside in mRNA + S-adenosyl-L-methionine = a 5'-end (N(7)-methyl 5'-triphosphoguanosine)-(2'-O-methyl-ribonucleoside) in mRNA + S-adenosyl-L-homocysteine + H(+). Functionally, S-adenosyl-L-methionine-dependent methyltransferase that mediates mRNA cap1 2'-O-ribose methylation to the 5'-cap structure of mRNAs. Methylates the ribose of the first nucleotide of a m(7)GpppG-capped mRNA and small nuclear RNA (snRNA) to produce m(7)GpppRm (cap1). Displays a preference for cap0 transcripts. Cap1 modification is linked to higher levels of translation. May be involved in the interferon response pathway. The sequence is that of Cap-specific mRNA (nucleoside-2'-O-)-methyltransferase 1 (CMTR1) from Ailuropoda melanoleuca (Giant panda).